The chain runs to 308 residues: Carbamate kinase (308 aa).

It belongs to the carbamate kinase family.

It is found in the cytoplasm. It catalyses the reaction hydrogencarbonate + NH4(+) + ATP = carbamoyl phosphate + ADP + H2O + H(+). This chain is Carbamate kinase, found in Synechocystis sp. (strain ATCC 27184 / PCC 6803 / Kazusa).